Consider the following 274-residue polypeptide: Small ribosomal subunit protein uS2 (274 aa).

Positions 255–274 are disordered; sequence AEAESEDKGEVLYSFDDEEE.

This sequence belongs to the universal ribosomal protein uS2 family.

This Gloeobacter violaceus (strain ATCC 29082 / PCC 7421) protein is Small ribosomal subunit protein uS2.